The sequence spans 2368 residues: Highly reducing polyketide synthase cla2 (2368 aa).

The 425-residue stretch at glutamine 10–alanine 434 folds into the Ketosynthase family 3 (KS3) domain. Catalysis depends on for beta-ketoacyl synthase activity residues cysteine 182, histidine 317, and histidine 357. Positions phenylalanine 548–leucine 877 are malonyl-CoA:ACP transacylase (MAT) domain. The active-site For malonyltransferase activity is the serine 638. Residues histidine 936–lysine 1071 are N-terminal hotdog fold. Residues histidine 936 to threonine 1175 are dehydratase (DH) domain. Residues histidine 936–alanine 1255 enclose the PKS/mFAS DH domain. The active-site Proton acceptor; for dehydratase activity is the histidine 968. The interval proline 1099 to alanine 1255 is C-terminal hotdog fold. Aspartate 1165 acts as the Proton donor; for dehydratase activity in catalysis. Residues glycine 1655–leucine 1967 are enoylreductase (ER) domain. The interval alanine 1991–arginine 2170 is catalytic ketoreductase (KRc) domain. The 78-residue stretch at glutamine 2283 to serine 2360 folds into the Carrier domain. At serine 2320 the chain carries O-(pantetheine 4'-phosphoryl)serine.

It functions in the pathway secondary metabolite biosynthesis. Its function is as follows. Highly reducing polyketide synthase; part of the gene cluster that mediates the biosynthesis of cladosporin, a tricyclic octaketide that acts as an antimalarial agent though inhibition of the Plasmodium falciparum lysyl-tRNA synthetase. The highly reducing polyketide synthase cla2 is responsible for biosynthesis up to the pentaketide stage, including of the tetrahydropyran (THP) ring, whereas the three subsequent ketide extensions with no reduction are catalyzed by the non-reducing polyketide synthase cla3. The sequence is that of Highly reducing polyketide synthase cla2 from Cladosporium cladosporioides.